The following is a 231-amino-acid chain: NADH-ubiquinone oxidoreductase chain 4 (231 aa).

Transmembrane regions (helical) follow at residues 1–21 (PIAG…YGII), 34–54 (LFLP…LTCL), 63–85 (IAYS…TPWG), 89–111 (AMAL…NTTY), 128–148 (ILPM…AIPP), 156–176 (LLIM…LGLS), and 211–231 (LLIA…ELVI).

It belongs to the complex I subunit 4 family.

It localises to the mitochondrion membrane. It carries out the reaction a ubiquinone + NADH + 5 H(+)(in) = a ubiquinol + NAD(+) + 4 H(+)(out). Functionally, core subunit of the mitochondrial membrane respiratory chain NADH dehydrogenase (Complex I) that is believed to belong to the minimal assembly required for catalysis. Complex I functions in the transfer of electrons from NADH to the respiratory chain. The immediate electron acceptor for the enzyme is believed to be ubiquinone. The sequence is that of NADH-ubiquinone oxidoreductase chain 4 (MT-ND4) from Crotalus adamanteus (Eastern diamondback rattlesnake).